Here is a 125-residue protein sequence, read N- to C-terminus: Large ribosomal subunit protein bL12 (125 aa).

The protein belongs to the bacterial ribosomal protein bL12 family. In terms of assembly, homodimer. Part of the ribosomal stalk of the 50S ribosomal subunit. Forms a multimeric L10(L12)X complex, where L10 forms an elongated spine to which 2 to 4 L12 dimers bind in a sequential fashion. Binds GTP-bound translation factors.

Forms part of the ribosomal stalk which helps the ribosome interact with GTP-bound translation factors. Is thus essential for accurate translation. This Alkalilimnicola ehrlichii (strain ATCC BAA-1101 / DSM 17681 / MLHE-1) protein is Large ribosomal subunit protein bL12.